Here is a 502-residue protein sequence, read N- to C-terminus: NADH-quinone oxidoreductase subunit N (502 aa).

A run of 14 helical transmembrane segments spans residues 16-36 (TLVPMLIPIIGALFIIVIDLF), 47-67 (MLSLLILGVDFVALVDSAGVF), 85-105 (LAILSQFIIVGASMLFIPLAL), 113-133 (FSYPEFFALFLFMIAGFQFMV), 138-158 (LILIFVGLETASLALYTLIAM), 172-192 (FTMGALAAGFFSFGSMVFYAL), 213-233 (IGFVLVGVVFLLAAFGFKLSM), 248-268 (SAALAGYMSIVPKIAAFIVAM), 273-293 (FLIHSGVVWLEVILYMGVVVT), 310-330 (MLAYSSISHAGFVMAAILIGT), 337-357 (LFLYWILFSFTNLGSFSMLWI), 387-407 (ASIMALFMLSLAGIPPFALFW), 410-430 (MYLMSSAITGGYTVLALIMAL), and 470-490 (TIIGIAAIGTIFAFVAVNQLI).

The protein belongs to the complex I subunit 2 family. As to quaternary structure, NDH-1 is composed of 14 different subunits. Subunits NuoA, H, J, K, L, M, N constitute the membrane sector of the complex.

It localises to the cell inner membrane. The enzyme catalyses a quinone + NADH + 5 H(+)(in) = a quinol + NAD(+) + 4 H(+)(out). Functionally, NDH-1 shuttles electrons from NADH, via FMN and iron-sulfur (Fe-S) centers, to quinones in the respiratory chain. The immediate electron acceptor for the enzyme in this species is believed to be ubiquinone. Couples the redox reaction to proton translocation (for every two electrons transferred, four hydrogen ions are translocated across the cytoplasmic membrane), and thus conserves the redox energy in a proton gradient. In Sulfurimonas denitrificans (strain ATCC 33889 / DSM 1251) (Thiomicrospira denitrificans (strain ATCC 33889 / DSM 1251)), this protein is NADH-quinone oxidoreductase subunit N.